The following is a 437-amino-acid chain: Nuclear distribution protein PAC1 (437 aa).

Residues 64–94 (LSVIRLQRKVMDLETRLEAAEREASSTHKAN) are a coiled coil. WD repeat units lie at residues 114 to 153 (LHKQ…IETT), 156 to 217 (AHTR…ANVK), 221 to 260 (GHDH…CVRT), 263 to 301 (GHTD…GKMT), 304 to 356 (GHEH…LLIL), 358 to 397 (GHDN…RCIR), and 401 to 437 (AHGH…KVWQ). A disordered region spans residues 165–186 (DFSQPDTGASRDKSHDKPRADV). A compositionally biased stretch (basic and acidic residues) spans 173–186 (ASRDKSHDKPRADV).

It belongs to the WD repeat LIS1/nudF family. As to quaternary structure, self-associates. Interacts with NDL1 and dynein.

The protein resides in the cytoplasm. Its subcellular location is the cytoskeleton. It localises to the spindle pole. Its function is as follows. Positively regulates the activity of the minus-end directed microtubule motor protein dynein. Plays a central role in positioning the mitotic spindle at the bud neck during cell division. Targets cytoplasmic dynein to microtubule plus ends, thereby promoting dynein-mediated microtubule sliding along the bud cortex and consequently the movement of the mitotic spindle to the bud neck. This is Nuclear distribution protein PAC1 from Yarrowia lipolytica (strain CLIB 122 / E 150) (Yeast).